Here is a 402-residue protein sequence, read N- to C-terminus: Phosphoglycerate kinase (402 aa).

Residues Asp-21–Asn-23, Arg-36, His-59–Arg-62, Arg-119, and Arg-154 contribute to the substrate site. ATP is bound by residues Lys-207, Gly-298, Glu-329, and Gly-356–Ala-359.

Belongs to the phosphoglycerate kinase family. As to quaternary structure, monomer.

Its subcellular location is the cytoplasm. It catalyses the reaction (2R)-3-phosphoglycerate + ATP = (2R)-3-phospho-glyceroyl phosphate + ADP. It functions in the pathway carbohydrate degradation; glycolysis; pyruvate from D-glyceraldehyde 3-phosphate: step 2/5. The protein is Phosphoglycerate kinase (pgk) of Chlamydia pneumoniae (Chlamydophila pneumoniae).